The following is a 143-amino-acid chain: Large-conductance mechanosensitive channel (143 aa).

The next 2 helical transmembrane spans lie at Phe-10–Ser-30 and Gly-89–Val-109.

Belongs to the MscL family. In terms of assembly, homopentamer.

The protein localises to the cell inner membrane. In terms of biological role, channel that opens in response to stretch forces in the membrane lipid bilayer. May participate in the regulation of osmotic pressure changes within the cell. In Burkholderia multivorans (strain ATCC 17616 / 249), this protein is Large-conductance mechanosensitive channel.